We begin with the raw amino-acid sequence, 386 residues long: 8-amino-7-oxononanoate synthase (386 aa).

Arg31 is a binding site for substrate. 109–110 (GY) contributes to the pyridoxal 5'-phosphate binding site. Residue His134 participates in substrate binding. Pyridoxal 5'-phosphate contacts are provided by residues Ser180, 205-208 (DEAH), and 236-239 (TLSK). Residue Lys239 is modified to N6-(pyridoxal phosphate)lysine. Thr349 is a substrate binding site.

The protein belongs to the class-II pyridoxal-phosphate-dependent aminotransferase family. BioF subfamily. As to quaternary structure, homodimer. Requires pyridoxal 5'-phosphate as cofactor.

It carries out the reaction 6-carboxyhexanoyl-[ACP] + L-alanine + H(+) = (8S)-8-amino-7-oxononanoate + holo-[ACP] + CO2. The protein operates within cofactor biosynthesis; biotin biosynthesis. In terms of biological role, catalyzes the decarboxylative condensation of pimeloyl-[acyl-carrier protein] and L-alanine to produce 8-amino-7-oxononanoate (AON), [acyl-carrier protein], and carbon dioxide. The polypeptide is 8-amino-7-oxononanoate synthase (Mycobacterium bovis (strain ATCC BAA-935 / AF2122/97)).